The following is a 1516-amino-acid chain: AP-4 complex accessory subunit RUSC2 (1516 aa).

6 disordered regions span residues 33 to 105 (AGGG…PFLL), 202 to 224 (LDEC…SGFS), 229 to 248 (WKLS…SGDQ), 331 to 351 (SKMS…GYGC), 404 to 445 (LSSQ…PSEY), and 478 to 511 (GQVY…PVRL). Residues 66–81 (LFSSLHSTPGGTARSI) are compositionally biased toward polar residues. Over residues 82–92 (DSTKSRSRDGR) the composition is skewed to basic and acidic residues. The segment covering 206–217 (GGPGGSGSGGGA) has biased composition (gly residues). Residues 333–344 (MSYESHHPESGG) show a composition bias toward basic and acidic residues. Over residues 405–420 (SSQSSPSPAGSSITSC) the composition is skewed to low complexity. Residues 428–440 (SPPPGPGPDPGPS) are compositionally biased toward pro residues. The segment covering 480 to 493 (VYTNTSPPNLSTGR) has biased composition (polar residues). 3 positions are modified to phosphoserine: S536, S543, and S559. Disordered stretches follow at residues 550-588 (GRKK…APLD), 646-688 (LMDP…KEQR), 727-836 (RTQQ…PQKE), and 868-889 (ESLA…ANHL). Over residues 567–579 (GDSSQEFSPIQEA) the composition is skewed to polar residues. S656 is subject to Phosphoserine. Residues 729-746 (QQPAPLAAPAAQVSVPAP) are compositionally biased toward low complexity. Residue S781 is modified to Phosphoserine. Residues 791–801 (PSTDSSASTSC) show a composition bias toward low complexity. An RUN domain is found at 1031–1175 (NVGHLVLKYL…LPFSLDLLFQ (145 aa)). 3 disordered regions span residues 1210-1261 (RARG…GRAR), 1286-1408 (IEGS…LPSD), and 1422-1449 (QTVG…SSPP). Residues 1219 to 1230 (DVDRAAQGERVK) show a composition bias toward basic and acidic residues. Acidic residues predominate over residues 1237 to 1251 (GGEEEEEEEETEEVA). A compositionally biased stretch (basic and acidic residues) spans 1355–1364 (ELRRSREREG). Residues S1368 and S1380 each carry the phosphoserine modification. Basic and acidic residues predominate over residues 1426–1437 (SRREPEPKESLQ). One can recognise an SH3 domain in the interval 1447-1506 (SPPCEVQALCHHLATGPGQLSFHKGDILRVLGRAGGDWLRCSRGPDSGLVPLAYVTLTPT).

As to quaternary structure, associated component of the adapter-like complex 4 (AP-4). Interacts with active RAB1A and RAB1B, and with GOLGA2. Interacts (via RUN domain) with RAB35 (GTP-bound form); the interaction recruits RUSC2 to the plasma membrane. Widely expressed, with highest levels in brain and testis.

It is found in the cytoplasm. The protein localises to the cytosol. It localises to the cell membrane. Functionally, associates with the adapter-like complex 4 (AP-4) and may therefore play a role in vesicular trafficking of proteins at the trans-Golgi network. This is AP-4 complex accessory subunit RUSC2 from Homo sapiens (Human).